A 115-amino-acid polypeptide reads, in one-letter code: UPF0597 protein HI_0855 (115 aa).

Belongs to the UPF0597 family.

The protein is UPF0597 protein HI_0855 of Haemophilus influenzae (strain ATCC 51907 / DSM 11121 / KW20 / Rd).